The sequence spans 196 residues: MKPLVVFVLGGPGAGKGTQCARIVEKYGYTHLSAGELLRDERKNPDSQYGELIEKYIKEGKIVPVEITISLLKREMDQTMAANAQKNKFLIDGFPRNQDNLQGWNKTMDGKADVSFVLFFDCNNEICIDRCLERGKSSGRSDDNRESLEKRIQTYLESTKPIIDLYEEMGKVKKIDASKSVDEVFGDVMKIFDKEG.

Residue 13-18 (GAGKGT) coordinates ATP. Position 33 is a phosphoserine (S33). The segment at 33-63 (SAGELLRDERKNPDSQYGELIEKYIKEGKIV) is NMP. R39 contacts a ribonucleoside 5'-phosphate. N6-acetyllysine is present on residues K43 and K55. A ribonucleoside 5'-phosphate is bound at residue 61–63 (KIV). K73 participates in a covalent cross-link: Glycyl lysine isopeptide (Lys-Gly) (interchain with G-Cter in SUMO2). 93–96 (GFPR) provides a ligand contact to a ribonucleoside 5'-phosphate. N100 contributes to the CMP binding site. The residue at position 106 (K106) is an N6-succinyllysine. The LID stretch occupies residues 133-143 (ERGKSSGRSDD). R134 provides a ligand contact to ATP. 2 residues coordinate a ribonucleoside 5'-phosphate: R140 and R151. Position 179 (K179) interacts with ATP. At S180 the chain carries Phosphoserine.

Belongs to the adenylate kinase family. UMP-CMP kinase subfamily. Monomer. Requires Mg(2+) as cofactor.

It is found in the nucleus. Its subcellular location is the cytoplasm. It catalyses the reaction CMP + ATP = CDP + ADP. The catalysed reaction is dCMP + ATP = dCDP + ADP. It carries out the reaction UMP + ATP = UDP + ADP. The enzyme catalyses a 2'-deoxyribonucleoside 5'-diphosphate + ATP = a 2'-deoxyribonucleoside 5'-triphosphate + ADP. It catalyses the reaction a ribonucleoside 5'-diphosphate + ATP = a ribonucleoside 5'-triphosphate + ADP. Functionally, catalyzes the phosphorylation of pyrimidine nucleoside monophosphates at the expense of ATP. Plays an important role in de novo pyrimidine nucleotide biosynthesis. Has preference for UMP and CMP as phosphate acceptors. Also displays broad nucleoside diphosphate kinase activity. In Rattus norvegicus (Rat), this protein is UMP-CMP kinase (Cmpk1).